Here is a 320-residue protein sequence, read N- to C-terminus: Porphobilinogen deaminase (320 aa).

Cysteine 241 is subject to S-(dipyrrolylmethanemethyl)cysteine.

This sequence belongs to the HMBS family. Monomer. Dipyrromethane is required as a cofactor.

It catalyses the reaction 4 porphobilinogen + H2O = hydroxymethylbilane + 4 NH4(+). Its pathway is porphyrin-containing compound metabolism; protoporphyrin-IX biosynthesis; coproporphyrinogen-III from 5-aminolevulinate: step 2/4. In terms of biological role, tetrapolymerization of the monopyrrole PBG into the hydroxymethylbilane pre-uroporphyrinogen in several discrete steps. The chain is Porphobilinogen deaminase from Thermobifida fusca (strain YX).